The following is a 98-amino-acid chain: Putative transcriptional regulator YdaS (98 aa).

Functionally, when overexpressed, it induces Rac prophage excision, possibly to counteract the lethal toxicity of YdaT. Overexpression of ydaS or ydaST reduces growth and leads to loss of cell viability. May contribute to toxicity and morphological defects. This is Putative transcriptional regulator YdaS (ydaS) from Escherichia coli (strain K12).